We begin with the raw amino-acid sequence, 117 residues long: UPF0102 protein YE3728 (117 aa).

This sequence belongs to the UPF0102 family.

The chain is UPF0102 protein YE3728 from Yersinia enterocolitica serotype O:8 / biotype 1B (strain NCTC 13174 / 8081).